A 203-amino-acid chain; its full sequence is Mediator of RNA polymerase II transcription subunit 22 (203 aa).

Residues 93 to 123 (SVNEAINQRNQQLRSLQEECDKKLIALRDEI) are a coiled coil. The span at 164–188 (ESLSMPLTTATAEQSIATSQSSTPS) shows a compositional bias: polar residues. The segment at 164–203 (ESLSMPLTTATAEQSIATSQSSTPSHPHVNGHGAGPTDHS) is disordered.

Belongs to the Mediator complex subunit 22 family. Component of the Mediator complex.

It localises to the nucleus. Its function is as follows. Component of the Mediator complex, a coactivator involved in the regulated transcription of nearly all RNA polymerase II-dependent genes. Mediator functions as a bridge to convey information from gene-specific regulatory proteins to the basal RNA polymerase II transcription machinery. Mediator is recruited to promoters by direct interactions with regulatory proteins and serves as a scaffold for the assembly of a functional preinitiation complex with RNA polymerase II and the general transcription factors. The sequence is that of Mediator of RNA polymerase II transcription subunit 22 (MED22) from Gallus gallus (Chicken).